A 466-amino-acid polypeptide reads, in one-letter code: 3-isopropylmalate dehydratase large subunit (466 aa).

[4Fe-4S] cluster-binding residues include Cys-347, Cys-407, and Cys-410.

This sequence belongs to the aconitase/IPM isomerase family. LeuC type 1 subfamily. In terms of assembly, heterodimer of LeuC and LeuD. The cofactor is [4Fe-4S] cluster.

The enzyme catalyses (2R,3S)-3-isopropylmalate = (2S)-2-isopropylmalate. Its pathway is amino-acid biosynthesis; L-leucine biosynthesis; L-leucine from 3-methyl-2-oxobutanoate: step 2/4. Functionally, catalyzes the isomerization between 2-isopropylmalate and 3-isopropylmalate, via the formation of 2-isopropylmaleate. The protein is 3-isopropylmalate dehydratase large subunit of Pectobacterium atrosepticum (strain SCRI 1043 / ATCC BAA-672) (Erwinia carotovora subsp. atroseptica).